Reading from the N-terminus, the 327-residue chain is MDTGTHVVMGIALGGIATLDPVVGSDPAMAHAVMIATLAGSQAPDIDTVLKLKNNAVYIRNHRGFTHSIPAVLFWSVIIPAILYLFYPQADFLHLWLWTLLAVVLHVFVDIFNAYGTQAIRPFSKKWVALGLINTFDPFIFISHLAAIAIWYAGGSPGITFLSLYIILVGYYLVRLIMQLRIKRKLHEMIHDEIESIIISPTMKFRQWRIAVTTAHAFYVGRSMEGHVVILDTFNRVPVPETDVMHAAKQDDNIAAFLSFSPVYRWEVDTFKDHYEVRFIDLRYRSKGHYPFVAIVHIGHDLTIRSSYTGWIFSEEKLQKKLKLGSI.

A run of 4 helical transmembrane segments spans residues 68–88 (SIPA…LFYP), 92–112 (FLHL…VDIF), 127–147 (WVAL…HLAA), and 148–168 (IAIW…YIIL).

The protein localises to the cell membrane. May act as a negative regulator for the transcription of mutY, fabL, sspE and yfhP. This is an uncharacterized protein from Bacillus subtilis (strain 168).